The primary structure comprises 329 residues: DNA-directed RNA polymerase subunit alpha (329 aa).

The segment at 1-234 (MQGSVTEFLK…EQLDAFVELR (234 aa)) is alpha N-terminal domain (alpha-NTD). Positions 248-329 (FDPILLRPVD…WPPASLADDL (82 aa)) are alpha C-terminal domain (alpha-CTD).

Belongs to the RNA polymerase alpha chain family. In terms of assembly, homodimer. The RNAP catalytic core consists of 2 alpha, 1 beta, 1 beta' and 1 omega subunit. When a sigma factor is associated with the core the holoenzyme is formed, which can initiate transcription.

It carries out the reaction RNA(n) + a ribonucleoside 5'-triphosphate = RNA(n+1) + diphosphate. Its function is as follows. DNA-dependent RNA polymerase catalyzes the transcription of DNA into RNA using the four ribonucleoside triphosphates as substrates. The protein is DNA-directed RNA polymerase subunit alpha of Shewanella amazonensis (strain ATCC BAA-1098 / SB2B).